The following is a 437-amino-acid chain: Transmembrane protein with metallophosphoesterase domain (437 aa).

The next 5 helical transmembrane spans lie at 7-27, 41-61, 87-107, 116-136, and 164-184; these read LSAE…MLIS, ALLF…LGSL, IIVL…FFLV, LLSF…FVFG, and VLAL…AAQP. A divalent metal cation-binding residues include D211, H213, D243, N274, H376, and H378.

The protein belongs to the metallophosphoesterase superfamily. LOC643853 family. Requires a divalent metal cation as cofactor.

The protein resides in the membrane. The sequence is that of Transmembrane protein with metallophosphoesterase domain (tmppe) from Danio rerio (Zebrafish).